The sequence spans 206 residues: Adenylyl-sulfate kinase (206 aa).

36–43 provides a ligand contact to ATP; that stretch reads GLSGSGKS. Serine 110 functions as the Phosphoserine intermediate in the catalytic mechanism.

The protein belongs to the APS kinase family.

The catalysed reaction is adenosine 5'-phosphosulfate + ATP = 3'-phosphoadenylyl sulfate + ADP + H(+). Its pathway is sulfur metabolism; hydrogen sulfide biosynthesis; sulfite from sulfate: step 2/3. Functionally, catalyzes the synthesis of activated sulfate. This Buchnera aphidicola subsp. Acyrthosiphon pisum (strain APS) (Acyrthosiphon pisum symbiotic bacterium) protein is Adenylyl-sulfate kinase (cysC).